The primary structure comprises 301 residues: Homoserine O-acetyltransferase (301 aa).

Cys142 functions as the Acyl-thioester intermediate in the catalytic mechanism. Positions 163 and 192 each coordinate substrate. His235 functions as the Proton acceptor in the catalytic mechanism. Glu237 is a catalytic residue. Arg249 contributes to the substrate binding site.

This sequence belongs to the MetA family.

The protein localises to the cytoplasm. It catalyses the reaction L-homoserine + acetyl-CoA = O-acetyl-L-homoserine + CoA. Its pathway is amino-acid biosynthesis; L-methionine biosynthesis via de novo pathway; O-acetyl-L-homoserine from L-homoserine: step 1/1. Its function is as follows. Transfers an acetyl group from acetyl-CoA to L-homoserine, forming acetyl-L-homoserine. This Bacillus anthracis (strain A0248) protein is Homoserine O-acetyltransferase.